A 405-amino-acid polypeptide reads, in one-letter code: MAVNLNPPQAGQLPAVAGVELLVAEAGIKTPGRKDVLVVKLDKGNTVAGVFTRNRFCAAPVQLCQEHLAAGVQIRALVVNTGNANAGTGFDGRARALSVCRAVAERDQLQTEQVLPFSTGVILEPLPADKIVAALPALRQADWAEAAEAIMTTDTLAKAASRRLDIGGKAVTVTGIAKGSGMIHPNMATMLGFVATDAAVTRPMLNQLVREVADQSFNSITVDGDTSTNDSFILISTGQSGAELIDSAEQPAYQQLKQALLEVAIELAQAIVRDGEGATKFITVDVNGGRSVAECKDVAYAIARSPLVKTAFFASDPNLGRLLAAIGYAGVADLDVDRLSLYLDDVLVACEGGRNPAYKEAQGQAVMNQSEITVRVELGRGSASARVWTCDFSYEYVRINADYRS.

Positions 152, 178, 189, 276, 400, and 405 each coordinate substrate. Thr-189 acts as the Nucleophile in catalysis.

It belongs to the ArgJ family. In terms of assembly, heterotetramer of two alpha and two beta chains.

It localises to the cytoplasm. The enzyme catalyses N(2)-acetyl-L-ornithine + L-glutamate = N-acetyl-L-glutamate + L-ornithine. It carries out the reaction L-glutamate + acetyl-CoA = N-acetyl-L-glutamate + CoA + H(+). It participates in amino-acid biosynthesis; L-arginine biosynthesis; L-ornithine and N-acetyl-L-glutamate from L-glutamate and N(2)-acetyl-L-ornithine (cyclic): step 1/1. Its pathway is amino-acid biosynthesis; L-arginine biosynthesis; N(2)-acetyl-L-ornithine from L-glutamate: step 1/4. Catalyzes two activities which are involved in the cyclic version of arginine biosynthesis: the synthesis of N-acetylglutamate from glutamate and acetyl-CoA as the acetyl donor, and of ornithine by transacetylation between N(2)-acetylornithine and glutamate. In Chromobacterium violaceum (strain ATCC 12472 / DSM 30191 / JCM 1249 / CCUG 213 / NBRC 12614 / NCIMB 9131 / NCTC 9757 / MK), this protein is Arginine biosynthesis bifunctional protein ArgJ.